The primary structure comprises 396 residues: Small ribosomal subunit protein uS9m (396 aa).

Residues 374 to 396 are disordered; it reads PRVRERKKPGQEGARRKFTWKKR.

The protein belongs to the universal ribosomal protein uS9 family. Component of the mitochondrial ribosome small subunit (28S) which comprises a 12S rRNA and about 30 distinct proteins.

It localises to the mitochondrion. The polypeptide is Small ribosomal subunit protein uS9m (MRPS9) (Bos taurus (Bovine)).